A 160-amino-acid polypeptide reads, in one-letter code: Non-secretory ribonuclease (160 aa).

An N-terminal signal peptide occupies residues 1 to 27; it reads MVPKLFTSPICLLLLLGLMGVEGSLHA. Residue tryptophan 34 is glycosylated (C-linked (Man) tryptophan). Residue histidine 42 is the Proton acceptor of the active site. N-linked (GlcNAc...) asparagine glycosylation is present at asparagine 44. 4 disulfide bridges follow: cysteine 50–cysteine 110, cysteine 64–cysteine 122, cysteine 82–cysteine 137, and cysteine 89–cysteine 98. Tyrosine 60 is modified (3'-nitrotyrosine). 65-69 is a substrate binding site; that stretch reads KNQNT. 3 N-linked (GlcNAc...) asparagine glycosylation sites follow: asparagine 92, asparagine 111, and asparagine 138. The active-site Proton donor is the histidine 155.

This sequence belongs to the pancreatic ribonuclease family. As to quaternary structure, interacts with and forms a tight 1:1 complex with RNH1. Dimerization of two such complexes may occur.

The protein localises to the lysosome. It localises to the cytoplasmic granule. The enzyme catalyses an [RNA] containing cytidine + H2O = an [RNA]-3'-cytidine-3'-phosphate + a 5'-hydroxy-ribonucleotide-3'-[RNA].. It catalyses the reaction an [RNA] containing uridine + H2O = an [RNA]-3'-uridine-3'-phosphate + a 5'-hydroxy-ribonucleotide-3'-[RNA].. Functionally, this is a non-secretory ribonuclease. It is a pyrimidine specific nuclease with a slight preference for U. Cytotoxin and helminthotoxin. Possesses a wide variety of biological activities. The polypeptide is Non-secretory ribonuclease (RNASE2) (Papio hamadryas (Hamadryas baboon)).